The primary structure comprises 333 residues: Adenosine deaminase (333 aa).

Residues histidine 12 and histidine 14 each contribute to the Zn(2+) site. 3 residues coordinate substrate: histidine 14, aspartate 16, and glycine 170. Position 197 (histidine 197) interacts with Zn(2+). Glutamate 200 functions as the Proton donor in the catalytic mechanism. Residue aspartate 278 participates in Zn(2+) binding. Residue aspartate 279 coordinates substrate.

This sequence belongs to the metallo-dependent hydrolases superfamily. Adenosine and AMP deaminases family. Adenosine deaminase subfamily. Requires Zn(2+) as cofactor.

It carries out the reaction adenosine + H2O + H(+) = inosine + NH4(+). It catalyses the reaction 2'-deoxyadenosine + H2O + H(+) = 2'-deoxyinosine + NH4(+). Functionally, catalyzes the hydrolytic deamination of adenosine and 2-deoxyadenosine. This is Adenosine deaminase from Escherichia coli O139:H28 (strain E24377A / ETEC).